The following is a 745-amino-acid chain: MSLITRLLTGNNHLRIRALESLGKAGYSSHAKFSEHKPIERIRNIGISAHIDSGKTTLTERILFYTGRIAEMHEVRGKDNVGATMDSMELERQRGITIQSAATYTLWKDTNINIIDTPGHVDFTVEVERALRVLDGAVLVLCAVGGVQSQTLTVNRQMKRYNVPCLAFINKLDRLGSNPYRVLSQMRSKMNHNAAFIQLPIGVESNCKGIVDLVREKAIYFEGEHGMDIRLDEIPQDMRVESLERRQELIEHLSNADETLGELFLEEKPFTEDDIKAALRRTCINRTFTPVLVGTALKNKGVQPLLDAVLDYLPNPGEVENLGFIEKEGQDPEKIVLNPARDGKDPFVGLAFKLEAGRFGQLTYLRCYQGVLRKGDNIFNARTNKKVRIARLVRLHSNQMEDVNEVYAGDIFALFGVDCASGDTFTTNPKNNLSMESIFVPEPVVSMAIKPNNTKDRDNFSKAIARFTKEDPTFHFFFDNDVKETLVSGMGELHLEIYAQRMEREYGCPVTLGKPKVAFRETLVGPCEFDYLHKKQSGGSGQYARIIGIMEPLPPTQNTLLEFVDETVGTNVPKQFVPGVEKGYREMAEKGMLSGHKLSGIRFRLQDGGHHIVDSSELAFMLAAHGAIKEVFQNGSWQILEPIMLVEVTAPEEFQGAVMGHLSKRHGIITGTEGTEGWFTVYAEVPLNDMFGYAGELRSSTQGKGEFTMEYSRYSPCLPDVQDQIVRQYQESQGLAQPDKKKKKN.

One can recognise a tr-type G domain in the interval 40–317; it reads ERIRNIGISA…AVLDYLPNPG (278 aa). GTP-binding positions include 49-56, 116-120, and 170-173; these read AHIDSGKT, DTPGH, and NKLD.

This sequence belongs to the TRAFAC class translation factor GTPase superfamily. Classic translation factor GTPase family. EF-G/EF-2 subfamily.

It localises to the mitochondrion. Its pathway is protein biosynthesis; polypeptide chain elongation. Functionally, mitochondrial GTPase that catalyzes the GTP-dependent ribosomal translocation step during translation elongation. During this step, the ribosome changes from the pre-translocational (PRE) to the post-translocational (POST) state as the newly formed A-site-bound peptidyl-tRNA and P-site-bound deacylated tRNA move to the P and E sites, respectively. Catalyzes the coordinated movement of the two tRNA molecules, the mRNA and conformational changes in the ribosome. Essential during development as it acts as a retrograde signal from mitochondria to the nucleus to slow down cell proliferation if mitochondrial energy output is low. This chain is Elongation factor G, mitochondrial, found in Drosophila erecta (Fruit fly).